The primary structure comprises 328 residues: Beta-ketoacyl-[acyl-carrier-protein] synthase III (328 aa).

Active-site residues include Cys113 and His253. Positions 254–258 (QANLR) are ACP-binding. Asn283 is an active-site residue.

The protein belongs to the thiolase-like superfamily. FabH family. Homodimer.

It is found in the cytoplasm. The enzyme catalyses malonyl-[ACP] + acetyl-CoA + H(+) = 3-oxobutanoyl-[ACP] + CO2 + CoA. It participates in lipid metabolism; fatty acid biosynthesis. Functionally, catalyzes the condensation reaction of fatty acid synthesis by the addition to an acyl acceptor of two carbons from malonyl-ACP. Catalyzes the first condensation reaction which initiates fatty acid synthesis and may therefore play a role in governing the total rate of fatty acid production. Possesses both acetoacetyl-ACP synthase and acetyl transacylase activities. Its substrate specificity determines the biosynthesis of branched-chain and/or straight-chain of fatty acids. This Fusobacterium nucleatum subsp. nucleatum (strain ATCC 25586 / DSM 15643 / BCRC 10681 / CIP 101130 / JCM 8532 / KCTC 2640 / LMG 13131 / VPI 4355) protein is Beta-ketoacyl-[acyl-carrier-protein] synthase III.